Consider the following 334-residue polypeptide: uncharacterized protein (334 aa).

The protein belongs to the Gfo/Idh/MocA family.

This is an uncharacterized protein from Rhizobium meliloti (Ensifer meliloti).